The sequence spans 154 residues: MHCPFCSAHDTKVIDSRLVAEGDQVRRRRECQACGERFTTFETAELVMPRVIKQDGSRQPFDEDKLRAGMQRALEKRPVSVERLEAAIGRIKHELRATGEREVKSRVLGELVMAELRKLDEVAYIRFASVYRRFQDLNEFREEIERLSREPSKP.

A zinc finger lies at 3–34; it reads CPFCSAHDTKVIDSRLVAEGDQVRRRRECQAC. The ATP-cone domain occupies 49–139; that stretch reads PRVIKQDGSR…VYRRFQDLNE (91 aa).

The protein belongs to the NrdR family. Zn(2+) is required as a cofactor.

Functionally, negatively regulates transcription of bacterial ribonucleotide reductase nrd genes and operons by binding to NrdR-boxes. In Azotobacter vinelandii (strain DJ / ATCC BAA-1303), this protein is Transcriptional repressor NrdR.